The primary structure comprises 98 residues: Large ribosomal subunit protein uL23 (98 aa).

This sequence belongs to the universal ribosomal protein uL23 family. In terms of assembly, part of the 50S ribosomal subunit. Contacts protein L29, and trigger factor when it is bound to the ribosome.

In terms of biological role, one of the early assembly proteins it binds 23S rRNA. One of the proteins that surrounds the polypeptide exit tunnel on the outside of the ribosome. Forms the main docking site for trigger factor binding to the ribosome. In Alcanivorax borkumensis (strain ATCC 700651 / DSM 11573 / NCIMB 13689 / SK2), this protein is Large ribosomal subunit protein uL23.